The primary structure comprises 204 residues: Putative AgrB-like protein (204 aa).

4 helical membrane-spanning segments follow: residues 52-74 (YGIALVTGLLLQTVTVHLSYLWL), 87-107 (LNCTLISLMMFVLAPFVFQNV), 111-131 (NWIVLGTFAFILLNMFLFAPA), and 156-176 (LILTGIALLIPFAEMKTLIMI).

The protein belongs to the AgrB family.

Its subcellular location is the cell membrane. May be involved in the proteolytic processing of a quorum sensing system signal molecule precursor. This is Putative AgrB-like protein from Listeria monocytogenes serotype 4a (strain HCC23).